The primary structure comprises 511 residues: UDP-N-acetylmuramoyl-L-alanyl-D-glutamate--2,6-diaminopimelate ligase (511 aa).

Serine 33 is a binding site for UDP-N-acetyl-alpha-D-muramoyl-L-alanyl-D-glutamate. 118–124 (GTNGKTT) is an ATP binding site. UDP-N-acetyl-alpha-D-muramoyl-L-alanyl-D-glutamate-binding positions include 160–161 (TT), serine 187, glutamine 193, and arginine 195. Lysine 227 is modified (N6-carboxylysine). Residues arginine 403, 427–430 (DNPR), glycine 478, and glutamate 482 each bind meso-2,6-diaminopimelate. The Meso-diaminopimelate recognition motif signature appears at 427–430 (DNPR).

Belongs to the MurCDEF family. MurE subfamily. Requires Mg(2+) as cofactor. Carboxylation is probably crucial for Mg(2+) binding and, consequently, for the gamma-phosphate positioning of ATP.

Its subcellular location is the cytoplasm. The catalysed reaction is UDP-N-acetyl-alpha-D-muramoyl-L-alanyl-D-glutamate + meso-2,6-diaminopimelate + ATP = UDP-N-acetyl-alpha-D-muramoyl-L-alanyl-gamma-D-glutamyl-meso-2,6-diaminopimelate + ADP + phosphate + H(+). It functions in the pathway cell wall biogenesis; peptidoglycan biosynthesis. Its function is as follows. Catalyzes the addition of meso-diaminopimelic acid to the nucleotide precursor UDP-N-acetylmuramoyl-L-alanyl-D-glutamate (UMAG) in the biosynthesis of bacterial cell-wall peptidoglycan. The sequence is that of UDP-N-acetylmuramoyl-L-alanyl-D-glutamate--2,6-diaminopimelate ligase from Prochlorococcus marinus subsp. pastoris (strain CCMP1986 / NIES-2087 / MED4).